We begin with the raw amino-acid sequence, 429 residues long: Adenylosuccinate synthetase (429 aa).

GTP is bound by residues 12–18 (GDEGKGK) and 40–42 (GHT). Asp13 (proton acceptor) is an active-site residue. Mg(2+)-binding residues include Asp13 and Gly40. Residues 13–16 (DEGK), 38–41 (NAGH), Thr128, Arg142, Gln223, Thr238, and Arg302 contribute to the IMP site. His41 serves as the catalytic Proton donor. 298–304 (VNTGRPR) serves as a coordination point for substrate. GTP contacts are provided by residues Arg304, 330-332 (KLD), and 412-414 (GVG).

It belongs to the adenylosuccinate synthetase family. Homodimer. Mg(2+) serves as cofactor.

Its subcellular location is the cytoplasm. It catalyses the reaction IMP + L-aspartate + GTP = N(6)-(1,2-dicarboxyethyl)-AMP + GDP + phosphate + 2 H(+). Its pathway is purine metabolism; AMP biosynthesis via de novo pathway; AMP from IMP: step 1/2. Its function is as follows. Plays an important role in the de novo pathway of purine nucleotide biosynthesis. Catalyzes the first committed step in the biosynthesis of AMP from IMP. This Kocuria rhizophila (strain ATCC 9341 / DSM 348 / NBRC 103217 / DC2201) protein is Adenylosuccinate synthetase.